A 360-amino-acid polypeptide reads, in one-letter code: Mitogen-activated protein kinase 14 (360 aa).

Serine 2 carries the post-translational modification N-acetylserine. A Phosphoserine modification is found at serine 2. Threonine 16 is subject to Phosphothreonine. Positions 24-308 (YQNLSPVGSG…AAQALAHAYF (285 aa)) constitute a Protein kinase domain. ATP is bound by residues 30–38 (VGSGAYGSV) and lysine 53. Residue lysine 53 is modified to N6-acetyllysine. The active-site Proton acceptor is aspartate 150. An N6-acetyllysine modification is found at lysine 152. A Phosphothreonine; by MAP2K3, MAP2K4, MAP2K6 and autocatalysis modification is found at threonine 180. Position 182 is a phosphotyrosine; by MAP2K3, MAP2K4, MAP2K6 and autocatalysis (tyrosine 182). A Phosphothreonine modification is found at threonine 263. Position 323 is a phosphotyrosine; by ZAP70 (tyrosine 323).

Belongs to the protein kinase superfamily. CMGC Ser/Thr protein kinase family. MAP kinase subfamily. In terms of assembly, component of a signaling complex containing at least AKAP13, PKN1, MAPK14, ZAK and MAP2K3. Within this complex, AKAP13 interacts directly with PKN1, which in turn recruits MAPK14, MAP2K3 and ZAK. Binds to a kinase interaction motif within the protein tyrosine phosphatase, PTPRR. This interaction retains MAPK14 in the cytoplasm and prevents nuclear accumulation. Interacts with SPAG9 and GADD45A. Interacts with CDC25B, CDC25C, DUSP1, DUSP10, DUSP16, NP60, SUPT20H and TAB1. Interacts with casein kinase II subunits CSNK2A1 and CSNK2B. Interacts with PPM1D. Interacts with CDK5RAP3; recruits PPM1D to MAPK14 and may regulate its dephosphorylation. Interacts with DUSP2; this interaction does not lead to catalytic activation of DUSP2 and dephosphrylation of MAPK14. Mg(2+) is required as a cofactor. In terms of processing, dually phosphorylated on Thr-180 and Tyr-182 by the MAP2Ks MAP2K3/MKK3, MAP2K4/MKK4 and MAP2K6/MKK6 in response to inflammatory cytokines, environmental stress or growth factors, which activates the enzyme. Dual phosphorylation can also be mediated by TAB1-mediated autophosphorylation. TCR engagement in T-cells also leads to Tyr-323 phosphorylation by ZAP70. Dephosphorylated and inactivated by DUPS1, DUSP10 and DUSP16. PPM1D also mediates dephosphorylation and inactivation of MAPK14. Acetylated at Lys-53 and Lys-152 by KAT2B and EP300. Acetylation at Lys-53 increases the affinity for ATP and enhances kinase activity. Lys-53 and Lys-152 are deacetylated by HDAC3. Post-translationally, ubiquitinated. Ubiquitination leads to degradation by the proteasome pathway.

It localises to the cytoplasm. It is found in the nucleus. It carries out the reaction L-seryl-[protein] + ATP = O-phospho-L-seryl-[protein] + ADP + H(+). The enzyme catalyses L-threonyl-[protein] + ATP = O-phospho-L-threonyl-[protein] + ADP + H(+). With respect to regulation, activated by cell stresses such as DNA damage, heat shock, osmotic shock, anisomycin and sodium arsenite, as well as pro-inflammatory stimuli such as bacterial lipopolysaccharide (LPS) and interleukin-1. Activation occurs through dual phosphorylation of Thr-180 and Tyr-182 by either of two dual specificity kinases, MAP2K3/MKK3 or MAP2K6/MKK6, and potentially also MAP2K4/MKK4, as well as by TAB1-mediated autophosphorylation. MAPK14 phosphorylated on both Thr-180 and Tyr-182 is 10-20-fold more active than MAPK14 phosphorylated only on Thr-180, whereas MAPK14 phosphorylated on Tyr-182 alone is inactive. whereas Thr-180 is necessary for catalysis, Tyr-182 may be required for auto-activation and substrate recognition. Phosphorylated at Tyr-323 by ZAP70 in an alternative activation pathway in response to TCR signaling in T-cells. This alternative pathway is inhibited by GADD45A. Inhibited by dual specificity phosphatases, such as DUSP1, DUSP10, and DUSP16. Specifically inhibited by the binding of pyridinyl-imidazole compounds, which are cytokine-suppressive anti-inflammatory drugs (CSAID). SB203580 is an inhibitor of MAPK14. Functionally, serine/threonine kinase which acts as an essential component of the MAP kinase signal transduction pathway. MAPK14 is one of the four p38 MAPKs which play an important role in the cascades of cellular responses evoked by extracellular stimuli such as pro-inflammatory cytokines or physical stress leading to direct activation of transcription factors. Accordingly, p38 MAPKs phosphorylate a broad range of proteins and it has been estimated that they may have approximately 200 to 300 substrates each. Some of the targets are downstream kinases which are activated through phosphorylation and further phosphorylate additional targets. RPS6KA5/MSK1 and RPS6KA4/MSK2 can directly phosphorylate and activate transcription factors such as CREB1, ATF1, the NF-kappa-B isoform RELA/NFKB3, STAT1 and STAT3, but can also phosphorylate histone H3 and the nucleosomal protein HMGN1. RPS6KA5/MSK1 and RPS6KA4/MSK2 play important roles in the rapid induction of immediate-early genes in response to stress or mitogenic stimuli, either by inducing chromatin remodeling or by recruiting the transcription machinery. On the other hand, two other kinase targets, MAPKAPK2/MK2 and MAPKAPK3/MK3, participate in the control of gene expression mostly at the post-transcriptional level, by phosphorylating ZFP36 (tristetraprolin) and ELAVL1, and by regulating EEF2K, which is important for the elongation of mRNA during translation. MKNK1/MNK1 and MKNK2/MNK2, two other kinases activated by p38 MAPKs, regulate protein synthesis by phosphorylating the initiation factor EIF4E2. MAPK14 also interacts with casein kinase II, leading to its activation through autophosphorylation and further phosphorylation of TP53/p53. In the cytoplasm, the p38 MAPK pathway is an important regulator of protein turnover. For example, CFLAR is an inhibitor of TNF-induced apoptosis whose proteasome-mediated degradation is regulated by p38 MAPK phosphorylation. In a similar way, MAPK14 phosphorylates the ubiquitin ligase SIAH2, regulating its activity towards EGLN3. MAPK14 may also inhibit the lysosomal degradation pathway of autophagy by interfering with the intracellular trafficking of the transmembrane protein ATG9. Another function of MAPK14 is to regulate the endocytosis of membrane receptors by different mechanisms that impinge on the small GTPase RAB5A. In addition, clathrin-mediated EGFR internalization induced by inflammatory cytokines and UV irradiation depends on MAPK14-mediated phosphorylation of EGFR itself as well as of RAB5A effectors. Ectodomain shedding of transmembrane proteins is regulated by p38 MAPKs as well. In response to inflammatory stimuli, p38 MAPKs phosphorylate the membrane-associated metalloprotease ADAM17. Such phosphorylation is required for ADAM17-mediated ectodomain shedding of TGF-alpha family ligands, which results in the activation of EGFR signaling and cell proliferation. Another p38 MAPK substrate is FGFR1. FGFR1 can be translocated from the extracellular space into the cytosol and nucleus of target cells, and regulates processes such as rRNA synthesis and cell growth. FGFR1 translocation requires p38 MAPK activation. In the nucleus, many transcription factors are phosphorylated and activated by p38 MAPKs in response to different stimuli. Classical examples include ATF1, ATF2, ATF6, ELK1, PTPRH, DDIT3, TP53/p53 and MEF2C and MEF2A. The p38 MAPKs are emerging as important modulators of gene expression by regulating chromatin modifiers and remodelers. The promoters of several genes involved in the inflammatory response, such as IL6, IL8 and IL12B, display a p38 MAPK-dependent enrichment of histone H3 phosphorylation on 'Ser-10' (H3S10ph) in LPS-stimulated myeloid cells. This phosphorylation enhances the accessibility of the cryptic NF-kappa-B-binding sites marking promoters for increased NF-kappa-B recruitment. Phosphorylates CDC25B and CDC25C which is required for binding to 14-3-3 proteins and leads to initiation of a G2 delay after ultraviolet radiation. Phosphorylates TIAR following DNA damage, releasing TIAR from GADD45A mRNA and preventing mRNA degradation. The p38 MAPKs may also have kinase-independent roles, which are thought to be due to the binding to targets in the absence of phosphorylation. Protein O-Glc-N-acylation catalyzed by the OGT is regulated by MAPK14, and, although OGT does not seem to be phosphorylated by MAPK14, their interaction increases upon MAPK14 activation induced by glucose deprivation. This interaction may regulate OGT activity by recruiting it to specific targets such as neurofilament H, stimulating its O-Glc-N-acylation. Required in mid-fetal development for the growth of embryo-derived blood vessels in the labyrinth layer of the placenta. Also plays an essential role in developmental and stress-induced erythropoiesis, through regulation of EPO gene expression. Phosphorylates S100A9 at 'Thr-113'. This Pan troglodytes (Chimpanzee) protein is Mitogen-activated protein kinase 14.